Reading from the N-terminus, the 468-residue chain is COBRA-like protein 5 (468 aa).

The signal sequence occupies residues 1–22; it reads MELHRCSLLALLLAVTCSVAVA. Residues Asn31, Asn156, Asn164, and Asn228 are each glycosylated (N-linked (GlcNAc...) asparagine). The segment at 251–278 is disordered; it reads GGGKNARAGDGRSRRNSGGGGGHSGGTE. Asn340, Asn355, and Asn374 each carry an N-linked (GlcNAc...) asparagine glycan. Asn443 is lipidated: GPI-anchor amidated asparagine. The propeptide at 444–468 is removed in mature form; that stretch reads SAPIGPPRSVAAAASAILVVLLLVA.

This sequence belongs to the COBRA family. Expressed mainly in developing sclerenchyma cells and in vascular bundles.

It localises to the cell membrane. Functionally, involved in determining the orientation of cell expansion, probably by playing an important role in cellulose deposition. May act by recruiting cellulose synthesizing complexes to discrete positions on the cell surface. The sequence is that of COBRA-like protein 5 (BC1) from Oryza sativa subsp. indica (Rice).